Consider the following 499-residue polypeptide: Probable cytosol aminopeptidase (499 aa).

Residues lysine 263 and aspartate 268 each contribute to the Mn(2+) site. Residue lysine 275 is part of the active site. Mn(2+)-binding residues include aspartate 286, aspartate 345, and glutamate 347. The active site involves arginine 349.

Belongs to the peptidase M17 family. The cofactor is Mn(2+).

The protein localises to the cytoplasm. It catalyses the reaction Release of an N-terminal amino acid, Xaa-|-Yaa-, in which Xaa is preferably Leu, but may be other amino acids including Pro although not Arg or Lys, and Yaa may be Pro. Amino acid amides and methyl esters are also readily hydrolyzed, but rates on arylamides are exceedingly low.. The catalysed reaction is Release of an N-terminal amino acid, preferentially leucine, but not glutamic or aspartic acids.. Presumably involved in the processing and regular turnover of intracellular proteins. Catalyzes the removal of unsubstituted N-terminal amino acids from various peptides. The polypeptide is Probable cytosol aminopeptidase (Chlamydia trachomatis serovar A (strain ATCC VR-571B / DSM 19440 / HAR-13)).